The sequence spans 343 residues: Glyceraldehyde-3-phosphate dehydrogenase (343 aa).

Residues 13–14 and Gly-111 each bind NAD(+); that span reads TI. D-glyceraldehyde 3-phosphate is bound at residue 140–142; it reads SCN. The active-site Nucleophile is Cys-141. An NAD(+)-binding site is contributed by Arg-169. Residue 195–196 participates in D-glyceraldehyde 3-phosphate binding; sequence HA. Gln-303 lines the NAD(+) pocket.

It belongs to the glyceraldehyde-3-phosphate dehydrogenase family. As to quaternary structure, homotetramer.

The protein resides in the cytoplasm. It carries out the reaction D-glyceraldehyde 3-phosphate + phosphate + NADP(+) = (2R)-3-phospho-glyceroyl phosphate + NADPH + H(+). It catalyses the reaction D-glyceraldehyde 3-phosphate + phosphate + NAD(+) = (2R)-3-phospho-glyceroyl phosphate + NADH + H(+). It participates in carbohydrate degradation; glycolysis; pyruvate from D-glyceraldehyde 3-phosphate: step 1/5. This chain is Glyceraldehyde-3-phosphate dehydrogenase, found in Sulfolobus acidocaldarius (strain ATCC 33909 / DSM 639 / JCM 8929 / NBRC 15157 / NCIMB 11770).